A 332-amino-acid polypeptide reads, in one-letter code: Tetraacyldisaccharide 4'-kinase (332 aa).

Residue 60–67 (TVGGTGKT) coordinates ATP.

It belongs to the LpxK family.

The enzyme catalyses a lipid A disaccharide + ATP = a lipid IVA + ADP + H(+). Its pathway is glycolipid biosynthesis; lipid IV(A) biosynthesis; lipid IV(A) from (3R)-3-hydroxytetradecanoyl-[acyl-carrier-protein] and UDP-N-acetyl-alpha-D-glucosamine: step 6/6. In terms of biological role, transfers the gamma-phosphate of ATP to the 4'-position of a tetraacyldisaccharide 1-phosphate intermediate (termed DS-1-P) to form tetraacyldisaccharide 1,4'-bis-phosphate (lipid IVA). The chain is Tetraacyldisaccharide 4'-kinase from Pseudomonas paraeruginosa (strain DSM 24068 / PA7) (Pseudomonas aeruginosa (strain PA7)).